A 277-amino-acid chain; its full sequence is tRNA uridine(34) hydroxylase (277 aa).

The 96-residue stretch at 126-221 (SSPDVHVIDT…YLETVRGDDS (96 aa)) folds into the Rhodanese domain. Residue Cys-181 is the Cysteine persulfide intermediate of the active site.

It belongs to the TrhO family.

It catalyses the reaction uridine(34) in tRNA + AH2 + O2 = 5-hydroxyuridine(34) in tRNA + A + H2O. In terms of biological role, catalyzes oxygen-dependent 5-hydroxyuridine (ho5U) modification at position 34 in tRNAs. In Anaplasma marginale (strain Florida), this protein is tRNA uridine(34) hydroxylase.